A 237-amino-acid polypeptide reads, in one-letter code: MQKQAELYRGKAKTVYSTENPDLLVLEFRNDTSAGDGARIEQFDRKGMVNNKFNYFIMSKLAEAGIPTQMERLLSDTECLVKKLDMVPVECVVRNRAAGSLVKRLGIEEGIELNPPLFDLFLKNDAMHDPMVNESYCETFGWVSKENLARMKELTYKANDVLKKRFDDAGLILVDFKLEFGLYKGEVVLGDEFSPDGSRLWDKETLEKMDKDRFRQSLGGLIEAYEAVARRLGVQLD.

Belongs to the SAICAR synthetase family.

The enzyme catalyses 5-amino-1-(5-phospho-D-ribosyl)imidazole-4-carboxylate + L-aspartate + ATP = (2S)-2-[5-amino-1-(5-phospho-beta-D-ribosyl)imidazole-4-carboxamido]succinate + ADP + phosphate + 2 H(+). The protein operates within purine metabolism; IMP biosynthesis via de novo pathway; 5-amino-1-(5-phospho-D-ribosyl)imidazole-4-carboxamide from 5-amino-1-(5-phospho-D-ribosyl)imidazole-4-carboxylate: step 1/2. In Shigella boydii serotype 4 (strain Sb227), this protein is Phosphoribosylaminoimidazole-succinocarboxamide synthase.